The chain runs to 393 residues: Probable acetyl-CoA acetyltransferase (393 aa).

Position 2 (Thr2) is a propeptide, removed; alternate. Cys88 (acyl-thioester intermediate) is an active-site residue. Residues His349 and Cys379 each act as proton acceptor in the active site.

This sequence belongs to the thiolase-like superfamily. Thiolase family.

The catalysed reaction is 2 acetyl-CoA = acetoacetyl-CoA + CoA. This Mycobacterium tuberculosis (strain ATCC 25618 / H37Rv) protein is Probable acetyl-CoA acetyltransferase (fadA4).